We begin with the raw amino-acid sequence, 187 residues long: Elongation factor P (187 aa).

The protein belongs to the elongation factor P family.

It localises to the cytoplasm. Its pathway is protein biosynthesis; polypeptide chain elongation. Involved in peptide bond synthesis. Stimulates efficient translation and peptide-bond synthesis on native or reconstituted 70S ribosomes in vitro. Probably functions indirectly by altering the affinity of the ribosome for aminoacyl-tRNA, thus increasing their reactivity as acceptors for peptidyl transferase. This chain is Elongation factor P, found in Roseiflexus castenholzii (strain DSM 13941 / HLO8).